The chain runs to 305 residues: Methionyl-tRNA formyltransferase (305 aa).

111 to 114 provides a ligand contact to (6S)-5,6,7,8-tetrahydrofolate; the sequence is SLLP.

This sequence belongs to the Fmt family.

The catalysed reaction is L-methionyl-tRNA(fMet) + (6R)-10-formyltetrahydrofolate = N-formyl-L-methionyl-tRNA(fMet) + (6S)-5,6,7,8-tetrahydrofolate + H(+). Its function is as follows. Attaches a formyl group to the free amino group of methionyl-tRNA(fMet). The formyl group appears to play a dual role in the initiator identity of N-formylmethionyl-tRNA by promoting its recognition by IF2 and preventing the misappropriation of this tRNA by the elongation apparatus. This is Methionyl-tRNA formyltransferase from Helicobacter acinonychis (strain Sheeba).